The chain runs to 614 residues: Threonine--tRNA ligase (614 aa).

The interval 1–138 (MRTLMIHSDY…HPLSELSRTI (138 aa)) is editing domain. The segment at 133–157 (ELSRTITTEPEEESEDSEEEPSEPS) is disordered. The span at 141–154 (EPEEESEDSEEEPS) shows a compositional bias: acidic residues. The segment at 200–495 (PHVRLMREKE…TDKGNKPSLP (296 aa)) is catalytic. Zn(2+)-binding residues include Cys292, His344, and His466.

The protein belongs to the class-II aminoacyl-tRNA synthetase family. In terms of assembly, homodimer. The cofactor is Zn(2+).

Its subcellular location is the cytoplasm. The enzyme catalyses tRNA(Thr) + L-threonine + ATP = L-threonyl-tRNA(Thr) + AMP + diphosphate + H(+). Functionally, catalyzes the attachment of threonine to tRNA(Thr) in a two-step reaction: L-threonine is first activated by ATP to form Thr-AMP and then transferred to the acceptor end of tRNA(Thr). Also edits incorrectly charged L-seryl-tRNA(Thr). The polypeptide is Threonine--tRNA ligase (Methanosphaera stadtmanae (strain ATCC 43021 / DSM 3091 / JCM 11832 / MCB-3)).